The primary structure comprises 366 residues: Protein disulfide isomerase-like 2-1 (366 aa).

The N-terminal stretch at 1 to 29 (MATPQISRKALASLLLLVAAAAAVSTASA) is a signal peptide. Thioredoxin domains are found at residues 30–138 (DDVL…SEAA) and 139–257 (TNVK…EKCG). Residues Cys-59, Cys-62, Cys-178, and Cys-181 each act as nucleophile in the active site. Intrachain disulfides connect Cys-59–Cys-62 and Cys-178–Cys-181.

Belongs to the protein disulfide isomerase family.

It localises to the secreted. The enzyme catalyses Catalyzes the rearrangement of -S-S- bonds in proteins.. In terms of biological role, acts as a protein-folding catalyst that interacts with nascent polypeptides to catalyze the formation, isomerization, and reduction or oxidation of disulfide bonds. May play a role in storage protein biogenesis. The polypeptide is Protein disulfide isomerase-like 2-1 (PDIL2-1) (Oryza sativa subsp. japonica (Rice)).